The sequence spans 379 residues: Dual-specificity RNA methyltransferase RlmN (379 aa).

The active-site Proton acceptor is E95. Residues 101–345 form the Radical SAM core domain; the sequence is EETRGTLCVS…TTVRKTRGDD (245 aa). The cysteines at positions 108 and 350 are disulfide-linked. [4Fe-4S] cluster-binding residues include C115, C119, and C122. S-adenosyl-L-methionine contacts are provided by residues 176–177, S208, 230–232, and N307; these read GE and SLH. The active-site S-methylcysteine intermediate is C350.

It belongs to the radical SAM superfamily. RlmN family. The cofactor is [4Fe-4S] cluster.

Its subcellular location is the cytoplasm. It carries out the reaction adenosine(2503) in 23S rRNA + 2 reduced [2Fe-2S]-[ferredoxin] + 2 S-adenosyl-L-methionine = 2-methyladenosine(2503) in 23S rRNA + 5'-deoxyadenosine + L-methionine + 2 oxidized [2Fe-2S]-[ferredoxin] + S-adenosyl-L-homocysteine. It catalyses the reaction adenosine(37) in tRNA + 2 reduced [2Fe-2S]-[ferredoxin] + 2 S-adenosyl-L-methionine = 2-methyladenosine(37) in tRNA + 5'-deoxyadenosine + L-methionine + 2 oxidized [2Fe-2S]-[ferredoxin] + S-adenosyl-L-homocysteine. In terms of biological role, specifically methylates position 2 of adenine 2503 in 23S rRNA and position 2 of adenine 37 in tRNAs. m2A2503 modification seems to play a crucial role in the proofreading step occurring at the peptidyl transferase center and thus would serve to optimize ribosomal fidelity. The sequence is that of Dual-specificity RNA methyltransferase RlmN from Burkholderia ambifaria (strain MC40-6).